The sequence spans 511 residues: Adenosine deaminase 2 (511 aa).

The first 29 residues, 1-29 (MLVDGPSERPALCFLLLAVAMSFFGSALS), serve as a signal peptide directing secretion. The dimerization stretch occupies residues 30-100 (IDETRAHLLL…HLIERSQVFN (71 aa)). Positions 112 and 114 each coordinate Zn(2+). Substrate is bound at residue D115. A glycan (N-linked (GlcNAc...) asparagine) is linked at N127. The PRB domain stretch occupies residues 127-185 (NVTYRPHCHICFTPRGIMQFRFAHPTPRPSEKCSKWILLEDYRKRVQNVTEFDDSLLRN). An intrachain disulfide couples C137 to C159. N-linked (GlcNAc...) asparagine glycans are attached at residues N174 and N185. Residues 204–211 (WSKFETIF), H293, and G326 contribute to the substrate site. H356 is a binding site for Zn(2+). E359 serves as the catalytic Proton donor. N378 is a glycosylation site (N-linked (GlcNAc...) asparagine). H384 serves as the catalytic Proton acceptor. D441 is a binding site for Zn(2+). D442 lines the substrate pocket.

It belongs to the metallo-dependent hydrolases superfamily. Adenosine and AMP deaminases family. ADGF subfamily. In terms of assembly, homodimer. Interacts with adenosine receptors. Binds heparin. The cofactor is Zn(2+). In terms of tissue distribution, detected in blood plasma (at protein level). Widely expressed, with most abundant expression in human adult heart, lung, lymphoblasts, and placenta as well as fetal lung, liver, and kidney. In embryo, expressed in the outflow tract and atrium of the developing heart, the VII/VIII cranial nerve ganglion, and the notochord.

It is found in the secreted. The enzyme catalyses adenosine + H2O + H(+) = inosine + NH4(+). Its function is as follows. Adenosine deaminase that may contribute to the degradation of extracellular adenosine, a signaling molecule that controls a variety of cellular responses. Requires elevated adenosine levels for optimal enzyme activity. Binds to cell surfaces via proteoglycans and may play a role in the regulation of cell proliferation and differentiation, independently of its enzyme activity. In Homo sapiens (Human), this protein is Adenosine deaminase 2.